The chain runs to 156 residues: Snaclec alboaggregin-B subunit alpha (156 aa).

The N-terminal stretch at 1–23 (MGRFIFVSFGLLVVFLSLSGTGA) is a signal peptide. Residues 24 to 151 (DCPSDWSSFK…CEQKHIFMCK (128 aa)) form the C-type lectin domain. Cystine bridges form between cysteine 25-cysteine 36, cysteine 53-cysteine 150, and cysteine 125-cysteine 142.

This sequence belongs to the snaclec family. Heterodimer of subunits alpha and beta; disulfide-linked. Expressed by the venom gland.

The protein resides in the secreted. Functionally, weakly agglutinates platelets at high doses by binding to GPIbalpha (GP1BA). This chain is Snaclec alboaggregin-B subunit alpha, found in Trimeresurus albolabris (White-lipped pit viper).